Consider the following 334-residue polypeptide: N-chimaerin (334 aa).

Positions 1-10 are enriched in polar residues; the sequence is MPSKESWSGR. The disordered stretch occupies residues 1-22; it reads MPSKESWSGRKTNRATVHKSKQ. A Phosphothreonine modification is found at T67. The Phorbol-ester/DAG-type zinc finger occupies 80–130; sequence VHNFKVHTFRGPHWCEYCANFMWGLIAQGVKCADCGLNVHKQCSKMVPNDC. The Rho-GAP domain occupies 143–334; the sequence is CDLTTLVKAR…LLIKNEDILF (192 aa). Phosphothreonine is present on T215.

As to quaternary structure, interacts with EPHA4; effector of EPHA4 in axon guidance linking EPHA4 activation to RAC1 regulation. Post-translationally, phosphorylated. Phosphorylation is EPHA4 kinase activity-dependent.

Its function is as follows. GTPase-activating protein for p21-rac and a phorbol ester receptor. Involved in the assembly of neuronal locomotor circuits as a direct effector of EPHA4 in axon guidance. The chain is N-chimaerin (CHN1) from Bos taurus (Bovine).